A 299-amino-acid polypeptide reads, in one-letter code: MATH domain and coiled-coil domain-containing protein At2g42460 (299 aa).

One can recognise an MATH domain in the interval 7–130; the sequence is QKTFTWKIEN…NNTLFIEVYI (124 aa). Positions 225–262 form a coiled coil; that stretch reads FRVKWLKSKLDEISLARKKKVDADAARVQELEGKVKNQ.

This Arabidopsis thaliana (Mouse-ear cress) protein is MATH domain and coiled-coil domain-containing protein At2g42460.